A 340-amino-acid chain; its full sequence is Nuclear hormone receptor family member nhr-268 (340 aa).

Positions 1 to 75 (MNCLVCSARA…IGMKAASKND (75 aa)) form a DNA-binding region, nuclear receptor. 2 consecutive NR C4-type zinc fingers follow at residues 3–23 (CLVC…CFAC) and 39–58 (CKYF…CRAC). An NR LBD domain is found at 98–337 (KNDKNYSNFI…KRLMQDIFSH (240 aa)).

This sequence belongs to the nuclear hormone receptor family.

It is found in the nucleus. Orphan nuclear receptor. This is Nuclear hormone receptor family member nhr-268 (nhr-268) from Caenorhabditis elegans.